Here is a 513-residue protein sequence, read N- to C-terminus: Zinc finger CCCH-type with G patch domain-containing protein (513 aa).

Residues 155-178 (PCSYYLEGECRFDEAKCRFSHGAL) form a C3H1-type zinc finger. Residues 252–261 (DQDEDDELSS) are compositionally biased toward acidic residues. The disordered stretch occupies residues 252–283 (DQDEDDELSSEESNSSMNDNSSDEAESDMDDL). The span at 262–271 (EESNSSMNDN) shows a compositional bias: low complexity. The segment covering 272–283 (SSDEAESDMDDL) has biased composition (acidic residues). In terms of domain architecture, G-patch spans 312 to 358 (TRGIGSKLMEKMGYIHGTGLGSDGRGIVTPVSAQILPQGRSLDACME). A compositionally biased stretch (polar residues) spans 478-495 (VQMQSHKQELATLQAQER). The tract at residues 478-513 (VQMQSHKQELATLQAQERSLSKEQQTRKSKNKMFEF) is disordered. Over residues 496–513 (SLSKEQQTRKSKNKMFEF) the composition is skewed to basic and acidic residues.

Its subcellular location is the nucleus. Transcription repressor. The chain is Zinc finger CCCH-type with G patch domain-containing protein from Drosophila melanogaster (Fruit fly).